The chain runs to 707 residues: Polyribonucleotide nucleotidyltransferase (707 aa).

2 residues coordinate Mg(2+): aspartate 485 and aspartate 491. The region spanning 552-611 (PRIYTMKIDPKKIKDVIGKGGATIRTLTEETGTSIDIDDDGTVKIAAIDGNAVKEVMARI) is the KH domain. In terms of domain architecture, S1 motif spans 621–689 (GAVYTGKVTR…RQGRIRLTMK (69 aa)).

It belongs to the polyribonucleotide nucleotidyltransferase family. In terms of assembly, component of the RNA degradosome, which is a multiprotein complex involved in RNA processing and mRNA degradation. Requires Mg(2+) as cofactor.

Its subcellular location is the cytoplasm. It carries out the reaction RNA(n+1) + phosphate = RNA(n) + a ribonucleoside 5'-diphosphate. Its function is as follows. Involved in mRNA degradation. Catalyzes the phosphorolysis of single-stranded polyribonucleotides processively in the 3'- to 5'-direction. The sequence is that of Polyribonucleotide nucleotidyltransferase from Actinobacillus succinogenes (strain ATCC 55618 / DSM 22257 / CCUG 43843 / 130Z).